Consider the following 416-residue polypeptide: Ribulose bisphosphate carboxylase large chain (416 aa).

Lys5 is subject to N6,N6,N6-trimethyllysine. 2 residues coordinate substrate: Asn114 and Thr164. Catalysis depends on Lys166, which acts as the Proton acceptor. Lys168 contacts substrate. Mg(2+)-binding residues include Lys192, Asp194, and Glu195. Lys192 carries the post-translational modification N6-carboxylysine. His285 (proton acceptor) is an active-site residue. Substrate contacts are provided by Arg286, His318, and Ser370.

The protein belongs to the RuBisCO large chain family. Type I subfamily. As to quaternary structure, heterohexadecamer of 8 large chains and 8 small chains; disulfide-linked. The disulfide link is formed within the large subunit homodimers. It depends on Mg(2+) as a cofactor. Post-translationally, the disulfide bond which can form in the large chain dimeric partners within the hexadecamer appears to be associated with oxidative stress and protein turnover.

The protein localises to the plastid. It localises to the chloroplast. It carries out the reaction 2 (2R)-3-phosphoglycerate + 2 H(+) = D-ribulose 1,5-bisphosphate + CO2 + H2O. The catalysed reaction is D-ribulose 1,5-bisphosphate + O2 = 2-phosphoglycolate + (2R)-3-phosphoglycerate + 2 H(+). RuBisCO catalyzes two reactions: the carboxylation of D-ribulose 1,5-bisphosphate, the primary event in carbon dioxide fixation, as well as the oxidative fragmentation of the pentose substrate in the photorespiration process. Both reactions occur simultaneously and in competition at the same active site. The chain is Ribulose bisphosphate carboxylase large chain (rbcL) from Spigelia marilandica (Woodland pinkroot).